A 373-amino-acid chain; its full sequence is Asporin (373 aa).

Positions 1 to 15 (MKEYVMLLLLAVCSA) are cleaved as a signal peptide. The propeptide occupies 16–32 (KPFFSPSHTALKNMMLK). S48 is a glycosylation site (O-linked (GalNAc...) serine). The LRRNT domain occupies 59 to 95 (FFPFDLFPTCPFGCQCYSRVVHCSDLGLTSVPNNIPF). Disulfide bonds link C68–C74 and C72–C81. LRR repeat units follow at residues 96–117 (DTRM…DFKG), 120–141 (SLYA…TFLT), 144–166 (KLRR…PKSL), 167–186 (AELR…TFKG), 189–212 (ALHV…AFEG), 235–255 (TLLE…EDLK), 259–280 (ELQR…TFAN), 283–305 (RVRE…QELK), 306–327 (YLQI…DFCP), 328–349 (TVPK…PMKY), and 350–373 (WEIQ…NVGK). Residues 159-205 (PLNLPKSLAELRIHDNKVKKIQKDTFKGMNALHVLEMSANPLENNGI) are interaction with TGFB1. N-linked (GlcNAc...) asparagine glycosylation is present at N275. Residues C326 and C359 are joined by a disulfide bond.

This sequence belongs to the small leucine-rich proteoglycan (SLRP) family. SLRP class I subfamily. In terms of assembly, interacts with type I collagen. DCN can inhibit collagen binding. Interacts with TGFB1, TGFB2 and TGFB3. DCN, BGN, and FMOD inhibit binding to TGFB1. Interacts with BMP2. Interacts in vitro with type II collagen. In terms of tissue distribution, higher expression in heart, also detected in kidney, stomach, testes, and skin but only weakly in lung, skeletal muscle, small intestine, and thymus. Expressed specifically and predominantly in the periodontal ligament (PDL). During tooth development, strong expression is seen in the dental follicle, which is the progenitor tissue that forms cementum, alveolar bone, and the PDL. Expressed in the perichondria of the maxilla, mandible, vertebrae, and long bones. Predominantly expressed in the perichondrium/periosteum of long bones (at protein level).

It localises to the secreted. It is found in the extracellular space. The protein localises to the extracellular matrix. In terms of biological role, binds calcium and plays a role in osteoblast-driven collagen biomineralization activity. Critical regulator of TGF-beta in articular cartilage and plays an essential role in cartilage homeostasis and osteoarthritis (OA) pathogenesis. Negatively regulates chondrogenesis in the articular cartilage by blocking the TGF-beta/receptor interaction on the cell surface and inhibiting the canonical TGF-beta/Smad signal. Negatively regulates periodontal ligament (PDL) differentiation and mineralization to ensure that the PDL is not ossified and to maintain homeostasis of the tooth-supporting system. Inhibits BMP2-induced cytodifferentiation of PDL cells by preventing its binding to BMPR1B/BMP type-1B receptor, resulting in inhibition of BMP-dependent activation of SMAD proteins. Inhibits the interaction between TGFB1 and TGF-beta receptor type II in the presence of heparin/heparan sulfate in vitro. The protein is Asporin (Aspn) of Mus musculus (Mouse).